Consider the following 199-residue polypeptide: Glycerol-3-phosphate acyltransferase (199 aa).

Helical transmembrane passes span 4–24 (LVSV…FLMG), 51–71 (WAAL…AYLG), 77–97 (EWGF…PVWL), 111–131 (VMLL…ALAV), and 152–172 (LFLL…AVVI).

Belongs to the PlsY family. Probably interacts with PlsX.

The protein localises to the cell membrane. The catalysed reaction is an acyl phosphate + sn-glycerol 3-phosphate = a 1-acyl-sn-glycero-3-phosphate + phosphate. Its pathway is lipid metabolism; phospholipid metabolism. Catalyzes the transfer of an acyl group from acyl-phosphate (acyl-PO(4)) to glycerol-3-phosphate (G3P) to form lysophosphatidic acid (LPA). This enzyme utilizes acyl-phosphate as fatty acyl donor, but not acyl-CoA or acyl-ACP. In Symbiobacterium thermophilum (strain DSM 24528 / JCM 14929 / IAM 14863 / T), this protein is Glycerol-3-phosphate acyltransferase.